Consider the following 473-residue polypeptide: Deoxyribodipyrimidine photo-lyase (473 aa).

The Photolyase/cryptochrome alpha/beta domain maps to P2–I134. (6R)-5,10-methylene-5,6,7,8-tetrahydrofolate-binding residues include N109 and E110. Y224 contributes to the FAD binding site. A DNA-binding site is contributed by R228. T236–S240 provides a ligand contact to FAD. 2 interaction with DNA regions span residues E276 to Y283 and N343 to R344. Position 374–376 (D374–D376) interacts with FAD. Residue Q406 participates in DNA binding.

The protein belongs to the DNA photolyase class-1 family. In terms of assembly, monomer. FAD is required as a cofactor. Requires (6R)-5,10-methylene-5,6,7,8-tetrahydrofolate as cofactor.

The enzyme catalyses cyclobutadipyrimidine (in DNA) = 2 pyrimidine residues (in DNA).. Involved in repair of UV radiation-induced DNA damage. Catalyzes the light-dependent monomerization (300-600 nm) of cyclobutyl pyrimidine dimers (in cis-syn configuration), which are formed between adjacent bases on the same DNA strand upon exposure to ultraviolet radiation. This chain is Deoxyribodipyrimidine photo-lyase (phrB), found in Salmonella typhimurium (strain LT2 / SGSC1412 / ATCC 700720).